The following is an 880-amino-acid chain: Translation initiation factor IF-2 (880 aa).

The interval 1–251 (MVDTKNPGDK…PTAKPAPAKQ (251 aa)) is disordered. The span at 58-79 (PADAPAAPAPVAAAKPAPVRAP) shows a compositional bias: low complexity. The span at 115 to 183 (ARIRDEEERK…KRFGEEEAKK (69 aa)) shows a compositional bias: basic and acidic residues. Low complexity-rich tracts occupy residues 184–215 (AAAAAPAKTTAATTATAAKPGAPARAPGVAAD) and 233–250 (AARPVVAPKPTAKPAPAK). The region spanning 376–547 (PRSPVVTVMG…ALQAELLDLK (172 aa)) is the tr-type G domain. Residues 385–392 (GHVDHGKT) are G1. 385–392 (GHVDHGKT) is a binding site for GTP. Residues 410 to 414 (GITQH) are G2. A G3 region spans residues 433–436 (DTPG). GTP contacts are provided by residues 433–437 (DTPGH) and 487–490 (NKID). The G4 stretch occupies residues 487-490 (NKID). The segment at 523 to 525 (SAK) is G5.

This sequence belongs to the TRAFAC class translation factor GTPase superfamily. Classic translation factor GTPase family. IF-2 subfamily.

It localises to the cytoplasm. One of the essential components for the initiation of protein synthesis. Protects formylmethionyl-tRNA from spontaneous hydrolysis and promotes its binding to the 30S ribosomal subunits. Also involved in the hydrolysis of GTP during the formation of the 70S ribosomal complex. In Rhodopseudomonas palustris (strain BisB18), this protein is Translation initiation factor IF-2.